A 726-amino-acid chain; its full sequence is Prolyl endopeptidase-like (726 aa).

A Phosphoserine modification is found at Ser-138. Residues Ser-558, Asp-644, and His-689 each act as charge relay system in the active site.

The protein belongs to the peptidase S9A family. Homodimer. Interacts with the AP-1 complex.

Its subcellular location is the cytoplasm. The protein resides in the cytosol. The protein localises to the golgi apparatus. It localises to the trans-Golgi network. It is found in the cytoskeleton. Its subcellular location is the nucleus. Serine peptidase whose precise substrate specificity remains unclear. Does not cleave peptides after a arginine or lysine residue. Regulates trans-Golgi network morphology and sorting by regulating the membrane binding of the AP-1 complex. May play a role in the regulation of synaptic vesicle exocytosis. The protein is Prolyl endopeptidase-like (Prepl) of Rattus norvegicus (Rat).